The sequence spans 185 residues: Ribosome-recycling factor (185 aa).

It belongs to the RRF family.

The protein localises to the cytoplasm. In terms of biological role, responsible for the release of ribosomes from messenger RNA at the termination of protein biosynthesis. May increase the efficiency of translation by recycling ribosomes from one round of translation to another. This chain is Ribosome-recycling factor, found in Francisella tularensis subsp. tularensis (strain FSC 198).